The sequence spans 442 residues: MSEMTPREIVHELDAHIIGQKKAKRSVAVALRNRWRRMQLDADFRQEVTPKNILMIGPTGVGKTEIARRLAKLANAPFIKVEATKFTEVGYVGKEVEQIIRDLTDIAIKLTREQQMGKCRQRAEEHAEERILDALLPKPKNDWDNTDSDTSSNTRQIFRKKLREGQLDDKEIDIDVAQPQVGIEIMSPPGMEEMTNQLQSLFKNMGQAPAKRRKMKIKEAFKLLIEEEAAKLVNQEDLKEQAIELVEQHGIVFLDEIDKICKRGETSGPDVSREGVQRDLLPLVEGCTVTTKHGMVKTDHILFIASGAFQMAKPSDLIPELQGRLPIRVELDALSADDFKRILTEPHASLTEQYIALMATEGVTIEFAESGIESIAKAAWQVNERTENIGARRLHTVMEKLMEDISYEASDKSGSSFVIDADYVSAHLDNLVQDEDLSRFIL.

ATP-binding positions include I18 and G60–E65. A disordered region spans residues D133–Q156. D255, E320, and R392 together coordinate ATP.

This sequence belongs to the ClpX chaperone family. HslU subfamily. In terms of assembly, a double ring-shaped homohexamer of HslV is capped on each side by a ring-shaped HslU homohexamer. The assembly of the HslU/HslV complex is dependent on binding of ATP.

It is found in the cytoplasm. ATPase subunit of a proteasome-like degradation complex; this subunit has chaperone activity. The binding of ATP and its subsequent hydrolysis by HslU are essential for unfolding of protein substrates subsequently hydrolyzed by HslV. HslU recognizes the N-terminal part of its protein substrates and unfolds these before they are guided to HslV for hydrolysis. This Shewanella sp. (strain ANA-3) protein is ATP-dependent protease ATPase subunit HslU.